We begin with the raw amino-acid sequence, 301 residues long: Diaminopimelate epimerase (301 aa).

The substrate site is built by Asn15, Gln47, and Asn67. The Proton donor role is filled by Cys76. Residues 77–78, Asn163, Asn197, and 215–216 contribute to the substrate site; these read GN and ER. Cys224 functions as the Proton acceptor in the catalytic mechanism. Position 225–226 (225–226) interacts with substrate; the sequence is GS.

It belongs to the diaminopimelate epimerase family. As to quaternary structure, homodimer.

Its subcellular location is the cytoplasm. It catalyses the reaction (2S,6S)-2,6-diaminopimelate = meso-2,6-diaminopimelate. Its pathway is amino-acid biosynthesis; L-lysine biosynthesis via DAP pathway; DL-2,6-diaminopimelate from LL-2,6-diaminopimelate: step 1/1. Catalyzes the stereoinversion of LL-2,6-diaminopimelate (L,L-DAP) to meso-diaminopimelate (meso-DAP), a precursor of L-lysine and an essential component of the bacterial peptidoglycan. This is Diaminopimelate epimerase from Rhizobium meliloti (strain 1021) (Ensifer meliloti).